A 220-amino-acid polypeptide reads, in one-letter code: Ribonuclease P protein component 3 (220 aa).

It belongs to the eukaryotic/archaeal RNase P protein component 3 family. In terms of assembly, consists of a catalytic RNA component and at least 4-5 protein subunits.

It localises to the cytoplasm. It carries out the reaction Endonucleolytic cleavage of RNA, removing 5'-extranucleotides from tRNA precursor.. In terms of biological role, part of ribonuclease P, a protein complex that generates mature tRNA molecules by cleaving their 5'-ends. This chain is Ribonuclease P protein component 3, found in Thermococcus kodakarensis (strain ATCC BAA-918 / JCM 12380 / KOD1) (Pyrococcus kodakaraensis (strain KOD1)).